The following is a 1167-amino-acid chain: MPRRTDIKSILIIGAGPIVIGQACEFDYSGTQACKALKEEGFRVILVNSNPATIMTDPELADATYIEPITPEVVAKIIAKERPDALLPTMGGQTALNTALSLRRMGVLDRYNVEMIGADATAIDKAEDRALFREAMSKIGLETPKSMLANATDVKNADRKTHEAERAALKAEKPDNLDAELDALETRWNLGEGDRKQRYISHAMAIAAQALDHVGLPAIIRPSFTMGGTGGGIAYNRAEFYDIVQSGLDASPTTEVLIEESVLGWKEYEMEVVRDKADNCIIVCSIENIDPMGVHTGDSITVAPALTLTDKEYQMMRNASIAVLREIGVETGGSNVQFAVNPADGRLVVIEMNPRVSRSSALASKATGFPIAKIAAKLAVGYTLDELENDITGGATPASFEPSIDYVVTKIPRFAFEKFPGAEPVLTTAMKSVGEVMAIGRTFQESLQKALRGLETGLTGLDEIEIPGLGHGATVANHADDRNAIRAALGTPTPDRLRMVAQAIRMGTSLEDVHAMCKIDPWFLEQIAGILAMEARIREHGIPQDAVNLRMLKAMGFSDARLASLTRTDAEVVTKIREKLDVHPVYKRIDTCAAEFASPTAYMYSTYEVPFAGALANEAQVSSRKKVVILGGGPNRIGQGIEFDYCCCHAAFALRDAGYEAIMINCNPETVSTDYDTSDRLYFDPLTAEDVLEILRAEQASGELLGVIVQFGGQTPLKLADALEKAGIPILGTSPDMIDLAEDRDRFQKLLHKLGLSQPKNGIAYSVEQARLVAGELGFPLVVRPSYVLGGRAMQIIHDESMLQSYLLDTVPGLVPEDIKQKYPNDKTGQINTLLGKNPLLFDTYLSGAIEVDVDCLCDGKATFVSGILEHIEEAGIHSGDSACSLPVHSLPSELVDELERQTAALARALNVGGLMNVQYAIKDGTVYVLEVNPRASRTVPFVAKTIGRPIAKIAARIMAGETLEDAFAHYGAMPDPRNPGHIAVKEAVFPFARFPGVDILLGPEMRSTGEVMGLDRDFALAFAKSQLGAGVDLPRSGTLFVSVRDEDKKGILPAVKRLAGLGFKVLATSGTQRFLAENGVVAEKINKVLEGRPHIEDAIRNRQVQIVFNTTDGQKAVSDSKSLRRATLMQKVPYYTTLSGAAAVAEAIAALKAGSLEVRPLQEYFA.

Residues 1–455 form a carboxyphosphate synthetic domain region; the sequence is MPRRTDIKSI…SLQKALRGLE (455 aa). ATP contacts are provided by Arg-129, Arg-221, Gly-227, Gly-228, Glu-260, Val-262, Glu-267, Gly-293, Val-294, His-295, Gln-337, and Glu-351. An ATP-grasp 1 domain is found at 184–380; that stretch reads LETRWNLGEG…IAKIAAKLAV (197 aa). The Mg(2+) site is built by Gln-337, Glu-351, and Asn-353. 3 residues coordinate Mn(2+): Gln-337, Glu-351, and Asn-353. Residues 456-619 are oligomerization domain; sequence TGLTGLDEIE…PFAGALANEA (164 aa). The tract at residues 620–1031 is carbamoyl phosphate synthetic domain; sequence QVSSRKKVVI…AFAKSQLGAG (412 aa). Positions 748–960 constitute an ATP-grasp 2 domain; sequence QKLLHKLGLS…IAKIAARIMA (213 aa). Positions 784, 844, 846, 851, 876, 877, 878, 879, 919, and 931 each coordinate ATP. Gln-919, Glu-931, and Asn-933 together coordinate Mg(2+). Positions 919, 931, and 933 each coordinate Mn(2+). The 136-residue stretch at 1032-1167 folds into the MGS-like domain; it reads VDLPRSGTLF…EVRPLQEYFA (136 aa). Residues 1032–1167 are allosteric domain; the sequence is VDLPRSGTLF…EVRPLQEYFA (136 aa).

This sequence belongs to the CarB family. Composed of two chains; the small (or glutamine) chain promotes the hydrolysis of glutamine to ammonia, which is used by the large (or ammonia) chain to synthesize carbamoyl phosphate. Tetramer of heterodimers (alpha,beta)4. The cofactor is Mg(2+). Requires Mn(2+) as cofactor.

It carries out the reaction hydrogencarbonate + L-glutamine + 2 ATP + H2O = carbamoyl phosphate + L-glutamate + 2 ADP + phosphate + 2 H(+). It catalyses the reaction hydrogencarbonate + NH4(+) + 2 ATP = carbamoyl phosphate + 2 ADP + phosphate + 2 H(+). It functions in the pathway amino-acid biosynthesis; L-arginine biosynthesis; carbamoyl phosphate from bicarbonate: step 1/1. The protein operates within pyrimidine metabolism; UMP biosynthesis via de novo pathway; (S)-dihydroorotate from bicarbonate: step 1/3. Its function is as follows. Large subunit of the glutamine-dependent carbamoyl phosphate synthetase (CPSase). CPSase catalyzes the formation of carbamoyl phosphate from the ammonia moiety of glutamine, carbonate, and phosphate donated by ATP, constituting the first step of 2 biosynthetic pathways, one leading to arginine and/or urea and the other to pyrimidine nucleotides. The large subunit (synthetase) binds the substrates ammonia (free or transferred from glutamine from the small subunit), hydrogencarbonate and ATP and carries out an ATP-coupled ligase reaction, activating hydrogencarbonate by forming carboxy phosphate which reacts with ammonia to form carbamoyl phosphate. This Mesorhizobium japonicum (strain LMG 29417 / CECT 9101 / MAFF 303099) (Mesorhizobium loti (strain MAFF 303099)) protein is Carbamoyl phosphate synthase large chain.